We begin with the raw amino-acid sequence, 549 residues long: Lipase 4 (549 aa).

The first 15 residues, 1–15 (MKLALVLSLIVSVAA), serve as a signal peptide directing secretion. A disulfide bridge links Cys-75 with Cys-112. Catalysis depends on Ser-224, which acts as the Acyl-ester intermediate. Cys-283 and Cys-292 form a disulfide bridge. The active-site Charge relay system is Glu-356. A glycan (N-linked (GlcNAc...) asparagine) is linked at Asn-366. The active-site Charge relay system is the His-464.

This sequence belongs to the type-B carboxylesterase/lipase family.

The catalysed reaction is a triacylglycerol + H2O = a diacylglycerol + a fatty acid + H(+). This chain is Lipase 4 (LIP4), found in Diutina rugosa (Yeast).